A 253-amino-acid polypeptide reads, in one-letter code: tRNA uridine(34) hydroxylase (253 aa).

Residues 127-221 enclose the Rhodanese domain; the sequence is HGRPLVLLDT…YFEDVGGEGY (95 aa). Cysteine 181 (cysteine persulfide intermediate) is an active-site residue.

This sequence belongs to the TrhO family.

It catalyses the reaction uridine(34) in tRNA + AH2 + O2 = 5-hydroxyuridine(34) in tRNA + A + H2O. Functionally, catalyzes oxygen-dependent 5-hydroxyuridine (ho5U) modification at position 34 in tRNAs. The polypeptide is tRNA uridine(34) hydroxylase (Xanthomonas campestris pv. campestris (strain B100)).